The primary structure comprises 988 residues: Transposase for transposon Tn1546 (988 aa).

It belongs to the transposase 7 family.

Functionally, required for transposition of transposon Tn1546. This Enterococcus faecium (Streptococcus faecium) protein is Transposase for transposon Tn1546.